The following is a 397-amino-acid chain: Chalcone synthase 2 (397 aa).

Residue cysteine 168 is part of the active site.

This sequence belongs to the thiolase-like superfamily. Chalcone/stilbene synthases family.

The enzyme catalyses (E)-4-coumaroyl-CoA + 3 malonyl-CoA + 3 H(+) = 2',4,4',6'-tetrahydroxychalcone + 3 CO2 + 4 CoA. The protein operates within secondary metabolite biosynthesis; flavonoid biosynthesis. The primary product of this enzyme is 4,2',4',6'-tetrahydroxychalcone (also termed naringenin-chalcone or chalcone) which can under specific conditions spontaneously isomerize into naringenin. This chain is Chalcone synthase 2 (CHS2), found in Daucus carota (Wild carrot).